The sequence spans 336 residues: Dihydroorotate dehydrogenase (quinone) (336 aa).

FMN is bound by residues 62-66 (AGLDK) and threonine 86. Residue lysine 66 coordinates substrate. Residue 111 to 115 (NRMGF) coordinates substrate. Residues asparagine 139 and asparagine 172 each coordinate FMN. Asparagine 172 contributes to the substrate binding site. The active-site Nucleophile is serine 175. Asparagine 177 is a binding site for substrate. The FMN site is built by lysine 217 and threonine 245. 246 to 247 (NT) lines the substrate pocket. Residues glycine 268, glycine 297, and 318–319 (YS) contribute to the FMN site.

Belongs to the dihydroorotate dehydrogenase family. Type 2 subfamily. As to quaternary structure, monomer. Requires FMN as cofactor.

The protein resides in the cell membrane. It catalyses the reaction (S)-dihydroorotate + a quinone = orotate + a quinol. It participates in pyrimidine metabolism; UMP biosynthesis via de novo pathway; orotate from (S)-dihydroorotate (quinone route): step 1/1. Catalyzes the conversion of dihydroorotate to orotate with quinone as electron acceptor. This Klebsiella pneumoniae (strain 342) protein is Dihydroorotate dehydrogenase (quinone).